A 63-amino-acid polypeptide reads, in one-letter code: Large ribosomal subunit protein bL28 (63 aa).

The disordered stretch occupies residues 1 to 20; that stretch reads MSKRCAITGKGPMVGNNVSH.

It belongs to the bacterial ribosomal protein bL28 family.

The polypeptide is Large ribosomal subunit protein bL28 (Campylobacter concisus (strain 13826)).